Reading from the N-terminus, the 350-residue chain is Ion-translocating oxidoreductase complex subunit D (350 aa).

5 consecutive transmembrane segments (helical) span residues 19–39 (LMLLVILACLPGFLAQSWFFG), 41–61 (GTLIQILLALVTALGSEALVL), 67–87 (PVKPALLDGSAALTAVLIGLS), 88–108 (LPPLLPWWMLVLGTAFAIIIA), and 122–142 (PAMVAYVLLLVSFPVQMTSWL). The residue at position 186 (threonine 186) is an FMN phosphoryl threonine. The next 4 helical transmembrane spans lie at 213 to 233 (WGGIGWSWVNLGYLLGGLFLL), 242 to 262 (IPGAILGSLLLAATLGYLMTP), 264 to 284 (ATATPMFHLFSGATMLGAFFI), and 299 to 316 (LVYGVLIGVLVYVIRRFG).

This sequence belongs to the NqrB/RnfD family. In terms of assembly, the complex is composed of six subunits: RnfA, RnfB, RnfC, RnfD, RnfE and RnfG. It depends on FMN as a cofactor.

The protein localises to the cell inner membrane. In terms of biological role, part of a membrane-bound complex that couples electron transfer with translocation of ions across the membrane. In Aeromonas hydrophila subsp. hydrophila (strain ATCC 7966 / DSM 30187 / BCRC 13018 / CCUG 14551 / JCM 1027 / KCTC 2358 / NCIMB 9240 / NCTC 8049), this protein is Ion-translocating oxidoreductase complex subunit D.